The sequence spans 354 residues: Probable L-ascorbate-6-phosphate lactonase UlaG (354 aa).

The protein belongs to the UlaG family. It depends on a divalent metal cation as a cofactor.

The protein resides in the cytoplasm. The catalysed reaction is L-ascorbate 6-phosphate + H2O = 3-dehydro-L-gulonate 6-phosphate. It participates in cofactor degradation; L-ascorbate degradation; D-xylulose 5-phosphate from L-ascorbate: step 1/4. In terms of biological role, probably catalyzes the hydrolysis of L-ascorbate-6-P into 3-keto-L-gulonate-6-P. Is essential for L-ascorbate utilization under anaerobic conditions. The polypeptide is Probable L-ascorbate-6-phosphate lactonase UlaG (Shigella boydii serotype 4 (strain Sb227)).